The sequence spans 440 residues: Xylose isomerase (440 aa).

Residues His-100 and Asp-103 contribute to the active site. Mg(2+) is bound by residues Glu-231, Glu-267, His-270, Asp-295, Asp-306, Asp-308, and Asp-338.

The protein belongs to the xylose isomerase family. In terms of assembly, homotetramer. Mg(2+) serves as cofactor.

It localises to the cytoplasm. The enzyme catalyses alpha-D-xylose = alpha-D-xylulofuranose. This Burkholderia cenocepacia (strain HI2424) protein is Xylose isomerase.